The chain runs to 303 residues: N-acetylmuramic acid 6-phosphate etherase (303 aa).

The SIS domain occupies isoleucine 61 to lysine 224. Glutamate 89 (proton donor) is an active-site residue. Residue glutamate 120 is part of the active site.

The protein belongs to the GCKR-like family. MurNAc-6-P etherase subfamily. In terms of assembly, homodimer.

It carries out the reaction N-acetyl-D-muramate 6-phosphate + H2O = N-acetyl-D-glucosamine 6-phosphate + (R)-lactate. It participates in amino-sugar metabolism; 1,6-anhydro-N-acetylmuramate degradation. The protein operates within amino-sugar metabolism; N-acetylmuramate degradation. Its pathway is cell wall biogenesis; peptidoglycan recycling. Specifically catalyzes the cleavage of the D-lactyl ether substituent of MurNAc 6-phosphate, producing GlcNAc 6-phosphate and D-lactate. Together with AnmK, is also required for the utilization of anhydro-N-acetylmuramic acid (anhMurNAc) either imported from the medium or derived from its own cell wall murein, and thus plays a role in cell wall recycling. The chain is N-acetylmuramic acid 6-phosphate etherase (murQ) from Haemophilus influenzae (strain ATCC 51907 / DSM 11121 / KW20 / Rd).